The chain runs to 150 residues: FAD synthase (150 aa).

ATP contacts are provided by residues 11–12, 16–19, D96, and Y124; these read TF and HPGH.

This sequence belongs to the archaeal FAD synthase family. In terms of assembly, homodimer. A divalent metal cation serves as cofactor.

It carries out the reaction FMN + ATP + H(+) = FAD + diphosphate. It functions in the pathway cofactor biosynthesis; FAD biosynthesis; FAD from FMN: step 1/1. Catalyzes the transfer of the AMP portion of ATP to flavin mononucleotide (FMN) to produce flavin adenine dinucleotide (FAD) coenzyme. The protein is FAD synthase of Methanococcus maripaludis (strain C5 / ATCC BAA-1333).